A 93-amino-acid chain; its full sequence is Co-chaperonin GroES (93 aa).

The protein belongs to the GroES chaperonin family. In terms of assembly, heptamer of 7 subunits arranged in a ring. Interacts with the chaperonin GroEL.

It localises to the cytoplasm. Its function is as follows. Together with the chaperonin GroEL, plays an essential role in assisting protein folding. The GroEL-GroES system forms a nano-cage that allows encapsulation of the non-native substrate proteins and provides a physical environment optimized to promote and accelerate protein folding. GroES binds to the apical surface of the GroEL ring, thereby capping the opening of the GroEL channel. The polypeptide is Co-chaperonin GroES (Streptococcus gordonii).